Reading from the N-terminus, the 374-residue chain is Phosphatidylglycerol--prolipoprotein diacylglyceryl transferase (374 aa).

Helical transmembrane passes span 33–53, 155–175, 195–215, and 222–242; these read ICFI…IALF, LCWF…VFFY, LASH…TSYI, and LSFL…AVFI. An a 1,2-diacyl-sn-glycero-3-phospho-(1'-sn-glycerol)-binding site is contributed by Arg243. The next 3 helical transmembrane spans lie at 279 to 299, 306 to 326, and 341 to 361; these read PVQL…FTLW, LAAG…RFLL, and ILQM…CLVW.

This sequence belongs to the Lgt family.

The protein localises to the cell inner membrane. It carries out the reaction L-cysteinyl-[prolipoprotein] + a 1,2-diacyl-sn-glycero-3-phospho-(1'-sn-glycerol) = an S-1,2-diacyl-sn-glyceryl-L-cysteinyl-[prolipoprotein] + sn-glycerol 1-phosphate + H(+). It participates in protein modification; lipoprotein biosynthesis (diacylglyceryl transfer). In terms of biological role, catalyzes the transfer of the diacylglyceryl group from phosphatidylglycerol to the sulfhydryl group of the N-terminal cysteine of a prolipoprotein, the first step in the formation of mature lipoproteins. In Protochlamydia amoebophila (strain UWE25), this protein is Phosphatidylglycerol--prolipoprotein diacylglyceryl transferase.